We begin with the raw amino-acid sequence, 84 residues long: Small ribosomal subunit protein bS20 (84 aa).

This sequence belongs to the bacterial ribosomal protein bS20 family.

In terms of biological role, binds directly to 16S ribosomal RNA. The chain is Small ribosomal subunit protein bS20 from Bacteroides fragilis (strain ATCC 25285 / DSM 2151 / CCUG 4856 / JCM 11019 / LMG 10263 / NCTC 9343 / Onslow / VPI 2553 / EN-2).